Here is a 373-residue protein sequence, read N- to C-terminus: Protein RETARDED ROOT GROWTH, mitochondrial (373 aa).

Residues methionine 1–phenylalanine 49 constitute a mitochondrion transit peptide. A helical transmembrane segment spans residues glutamate 346–tyrosine 362.

This sequence belongs to the RMD1/sif2 family. As to expression, predominantly expressed in the root meristem, in the primary and lateral root tips. Also present in leaves and pollen.

It is found in the mitochondrion membrane. Its subcellular location is the mitochondrion. Functionally, required for the maintenance of mitochondrial structure. Positive regulator of cell division and endoreduplication but negative regulator of cell expansion in the postembryonic root meristem, thus leading to the promotion of root growth. This chain is Protein RETARDED ROOT GROWTH, mitochondrial, found in Arabidopsis thaliana (Mouse-ear cress).